The sequence spans 523 residues: Mitochondrial distribution and morphology protein 34 (523 aa).

The region spanning 1–200 (MSFKVNWKSL…LPTLIHQFSL (200 aa)) is the SMP-LTD domain. Residues 489–523 (ELSMDRSGKRKQRNYGSATYESENPIVAPPPPYSH) are disordered.

Belongs to the MDM34 family. As to quaternary structure, component of the ER-mitochondria encounter structure (ERMES) or MDM complex, composed of MMM1, MDM10, MDM12 and MDM34.

Its subcellular location is the mitochondrion outer membrane. Component of the ERMES/MDM complex, which serves as a molecular tether to connect the endoplasmic reticulum (ER) and mitochondria. Components of this complex are involved in the control of mitochondrial shape and protein biogenesis, and function in nonvesicular lipid trafficking between the ER and mitochondria. MDM34 is required for the interaction of the ER-resident membrane protein MMM1 and the outer mitochondrial membrane-resident beta-barrel protein MDM10. The chain is Mitochondrial distribution and morphology protein 34 from Scheffersomyces stipitis (strain ATCC 58785 / CBS 6054 / NBRC 10063 / NRRL Y-11545) (Yeast).